We begin with the raw amino-acid sequence, 314 residues long: Glutamyl-Q tRNA(Asp) synthetase (314 aa).

Residues 14 to 18 and Glu-50 each bind L-glutamate; that span reads RFAPS. The short motif at 17–27 is the 'HIGH' region element; it reads PSPTGPLHVGS. Zn(2+) is bound by residues Cys-106, Cys-108, Tyr-129, and Cys-133. Positions 187 and 205 each coordinate L-glutamate. The short motif at 243–247 is the 'KMSKS' region element; it reads KLSKR. An ATP-binding site is contributed by Lys-246.

This sequence belongs to the class-I aminoacyl-tRNA synthetase family. GluQ subfamily. The cofactor is Zn(2+).

Its function is as follows. Catalyzes the tRNA-independent activation of glutamate in presence of ATP and the subsequent transfer of glutamate onto a tRNA(Asp). Glutamate is transferred on the 2-amino-5-(4,5-dihydroxy-2-cyclopenten-1-yl) moiety of the queuosine in the wobble position of the QUC anticodon. The chain is Glutamyl-Q tRNA(Asp) synthetase from Geobacter sulfurreducens (strain ATCC 51573 / DSM 12127 / PCA).